The primary structure comprises 126 residues: Small ribosomal subunit protein uS11 (126 aa).

Belongs to the universal ribosomal protein uS11 family. Part of the 30S ribosomal subunit. Interacts with proteins S7 and S18. Binds to IF-3.

Its function is as follows. Located on the platform of the 30S subunit, it bridges several disparate RNA helices of the 16S rRNA. Forms part of the Shine-Dalgarno cleft in the 70S ribosome. This chain is Small ribosomal subunit protein uS11, found in Ehrlichia chaffeensis (strain ATCC CRL-10679 / Arkansas).